A 375-amino-acid polypeptide reads, in one-letter code: Ketohexokinase (375 aa).

Asp319 is a beta-D-fructose binding site.

Belongs to the carbohydrate kinase PfkB family. As to quaternary structure, homodimer.

It catalyses the reaction beta-D-fructose + ATP = beta-D-fructose 1-phosphate + ADP + H(+). The protein operates within carbohydrate metabolism; fructose metabolism. Its activity is regulated as follows. Activated in the presence of 0.5 M KCl. 85% activity at 3.5 M KCl. 60% activity without KCl. Functionally, catalyzes the ATP-dependent phosphorylation of the ketose sugar fructose to fructose-1-phosphate. Does not produce fructose-6-phosphate. The sugars D-glucose, D-galactose, L-rhamnose, D-xylose, L-arabinose and D-ribose are not substrates of this enzyme. The chain is Ketohexokinase from Haloferax volcanii (strain ATCC 29605 / DSM 3757 / JCM 8879 / NBRC 14742 / NCIMB 2012 / VKM B-1768 / DS2) (Halobacterium volcanii).